Reading from the N-terminus, the 1337-residue chain is ABC transporter D family member 1 (1337 aa).

A run of 4 helical transmembrane segments spans residues 24–44, 142–162, 247–267, and 342–362; these read ILLA…KSRV, APLF…LSTL, YASP…GTAI, and FLLK…PFFS. The ABC transmembrane type-1 1 domain maps to 117 to 395; that stretch reads VFRTALSNRL…SVIISLFQAL (279 aa). The ABC transporter 1 domain occupies 448–695; it reads VEFSDVKVVT…DAMVVQRAFA (248 aa). 481–488 contacts ATP; the sequence is GPNGSGKS. One can recognise an ABC transmembrane type-1 2 domain in the interval 751–1049; the sequence is LIPTIFDKQG…VVSQSFMAFG (299 aa). The chain crosses the membrane as a helical span at residues 900–920; that stretch reads LLTGQRGVAILYTYMLLGLGF. Positions 1091-1337 constitute an ABC transporter 2 domain; the sequence is LDSQDLLSFS…ELRSIEQTTE (247 aa). Residue 1130–1137 coordinates ATP; sequence GPNGSGKT.

This sequence belongs to the ABC transporter superfamily. ABCD family. Peroxisomal fatty acyl CoA transporter (TC 3.A.1.203) subfamily.

The protein resides in the peroxisome membrane. The protein localises to the glyoxysome membrane. The enzyme catalyses an acyl-CoA(out) + ATP + H2O = an acyl-CoA(in) + ADP + phosphate + H(+). In terms of biological role, contributes to the transport of fatty acids and their derivatives (acyl CoAs) across the peroxisomal membrane. Provides acetate to the glyoxylate cycle in developing seedlings. Involved in pollen tube elongation, ovule fertilization, and seeds germination after imbibition (controls the switch between the opposing developmental programs of dormancy and germination), probably by promoting beta-oxidation of storage lipids during gluconeogenesis. Required for biosynthesis of jasmonic acid and conversion of indole butyric acid to indole acetic acid. Confers sensitivity to monofluoroacetic acid (FAc), a toxic acetate analog, and to 2,4-dichlorophenoxybutyric acid (2,4-DB) and indole-3-butyric acid (IBA), two precursors of auxin after beta-oxidation. The chain is ABC transporter D family member 1 from Arabidopsis thaliana (Mouse-ear cress).